Consider the following 47-residue polypeptide: Lysis protein for colicin E9 (47 aa).

Positions 1–19 are cleaved as a signal peptide; that stretch reads MKKITGIILLLLAAIILAA. Residue cysteine 20 is the site of N-palmitoyl cysteine attachment. A lipid anchor (S-diacylglycerol cysteine) is attached at cysteine 20.

It localises to the cell outer membrane. Its function is as follows. Lysis proteins are required for both colicin release and partial cell lysis. In Escherichia coli, this protein is Lysis protein for colicin E9 (lys).